We begin with the raw amino-acid sequence, 350 residues long: D-guloside 3-dehydrogenase (350 aa).

This sequence belongs to the zinc-containing alcohol dehydrogenase family. Requires Zn(2+) as cofactor.

It carries out the reaction a D-guloside + NAD(+) = a 3-dehydro-D-guloside + NADH + H(+). Catalyzes the NAD(+)-dependent oxidation of the hydroxyl group at C3 of D-gulosides leading to 3-dehydro-D-gulosides. Probably functions in a metabolic pathway that transforms D-gulosides to D-glucosides. Is also able to catalyze the reverse reactions, i.e. the NADH-dependent reduction of the oxo group at C3 of 3-dehydro-D-gulosides leading to D-gulosides. In vitro, can oxidize D-gulose and methyl beta-D-guloside, and reduce methyl alpha-3-dehydro-D-guloside and methyl beta-3-dehydro-D-guloside. However, the actual specific physiological substrates for this metabolic pathway are unknown. The sequence is that of D-guloside 3-dehydrogenase (ycjQ) from Shigella flexneri.